Here is a 259-residue protein sequence, read N- to C-terminus: MTDLTASSLRALKLMDLTTLNDDDTNEKVIALCHQAKTPVGNTAAVCIYPRFIPIARKTLNAQGTPDVRIATVTNFPHGNDDIEIALAETRAAIAYGADEVDVVFPYRALIAGNEQVGFDLVKACKDACAAANVLLKVIIETGELKEEALIRKASEISIKAGADFIKTSTGKVPVNATPESARIMMEVIRDMGVSKTVGFKPAGGVRTAEDAQQFLAIADDLFGADWADSRHYRFGASSLLASLLKTLGHGDGKSASAY.

Residue D102 is the Proton donor/acceptor of the active site. Catalysis depends on K167, which acts as the Schiff-base intermediate with acetaldehyde. K201 serves as the catalytic Proton donor/acceptor.

This sequence belongs to the DeoC/FbaB aldolase family. DeoC type 2 subfamily.

The protein localises to the cytoplasm. The catalysed reaction is 2-deoxy-D-ribose 5-phosphate = D-glyceraldehyde 3-phosphate + acetaldehyde. It functions in the pathway carbohydrate degradation; 2-deoxy-D-ribose 1-phosphate degradation; D-glyceraldehyde 3-phosphate and acetaldehyde from 2-deoxy-alpha-D-ribose 1-phosphate: step 2/2. Its function is as follows. Catalyzes a reversible aldol reaction between acetaldehyde and D-glyceraldehyde 3-phosphate to generate 2-deoxy-D-ribose 5-phosphate. The protein is Deoxyribose-phosphate aldolase of Enterobacter sp. (strain 638).